The chain runs to 215 residues: Small ribosomal subunit protein bS6 (215 aa).

Disordered stretches follow at residues 121-153 and 187-215; these read RENN…QKPK and NQRQ…KDKQ. Residues 144-153 show a composition bias toward basic and acidic residues; sequence SRTEKAQKPK. Residues 188–198 are compositionally biased toward low complexity; the sequence is QRQNQQNNNNN. Basic and acidic residues predominate over residues 199–215; the sequence is RFDRNRNRQHNRFKDKQ.

It belongs to the bacterial ribosomal protein bS6 family.

Binds together with bS18 to 16S ribosomal RNA. The protein is Small ribosomal subunit protein bS6 (rpsF) of Mycoplasma pneumoniae (strain ATCC 29342 / M129 / Subtype 1) (Mycoplasmoides pneumoniae).